Reading from the N-terminus, the 600-residue chain is Glutamine--fructose-6-phosphate aminotransferase [isomerizing] (600 aa).

Cysteine 2 functions as the Nucleophile; for GATase activity in the catalytic mechanism. The 216-residue stretch at 2-217 folds into the Glutamine amidotransferase type-2 domain; it reads CGIVGFIGEQ…DKEIVIVTKE (216 aa). 2 consecutive SIS domains span residues 283-422 and 452-590; these read IRNA…AKGE and LAKQ…VDKP. Residue lysine 595 is the For Fru-6P isomerization activity of the active site.

Homodimer.

Its subcellular location is the cytoplasm. It catalyses the reaction D-fructose 6-phosphate + L-glutamine = D-glucosamine 6-phosphate + L-glutamate. Catalyzes the first step in hexosamine metabolism, converting fructose-6P into glucosamine-6P using glutamine as a nitrogen source. The protein is Glutamine--fructose-6-phosphate aminotransferase [isomerizing] of Bacillus cereus (strain ATCC 14579 / DSM 31 / CCUG 7414 / JCM 2152 / NBRC 15305 / NCIMB 9373 / NCTC 2599 / NRRL B-3711).